Reading from the N-terminus, the 173-residue chain is Crossover junction endodeoxyribonuclease RuvC (173 aa).

Catalysis depends on residues D8, E67, and D139. Residues D8, E67, and D139 each contribute to the Mg(2+) site.

Belongs to the RuvC family. Homodimer which binds Holliday junction (HJ) DNA. The HJ becomes 2-fold symmetrical on binding to RuvC with unstacked arms; it has a different conformation from HJ DNA in complex with RuvA. In the full resolvosome a probable DNA-RuvA(4)-RuvB(12)-RuvC(2) complex forms which resolves the HJ. Requires Mg(2+) as cofactor.

The protein resides in the cytoplasm. The catalysed reaction is Endonucleolytic cleavage at a junction such as a reciprocal single-stranded crossover between two homologous DNA duplexes (Holliday junction).. The RuvA-RuvB-RuvC complex processes Holliday junction (HJ) DNA during genetic recombination and DNA repair. Endonuclease that resolves HJ intermediates. Cleaves cruciform DNA by making single-stranded nicks across the HJ at symmetrical positions within the homologous arms, yielding a 5'-phosphate and a 3'-hydroxyl group; requires a central core of homology in the junction. The consensus cleavage sequence is 5'-(A/T)TT(C/G)-3'. Cleavage occurs on the 3'-side of the TT dinucleotide at the point of strand exchange. HJ branch migration catalyzed by RuvA-RuvB allows RuvC to scan DNA until it finds its consensus sequence, where it cleaves and resolves the cruciform DNA. The polypeptide is Crossover junction endodeoxyribonuclease RuvC (Citrobacter koseri (strain ATCC BAA-895 / CDC 4225-83 / SGSC4696)).